The chain runs to 317 residues: Secreted frizzled-related protein 5 (317 aa).

Residues 1 to 29 form the signal peptide; the sequence is MRAAAAGGGVRTAALALLLGALHWAPARC. Residues 48–165 enclose the FZ domain; that stretch reads SKPPQCLDIP…PLDNDLCIAV (118 aa). Cystine bridges form between C53–C116, C63–C109, C100–C135, C124–C162, C128–C152, C181–C253, C184–C255, and C198–C303. The region spanning 181-303 is the NTR domain; that stretch reads CAQCEMEHSA…AVKFMFSYPC (123 aa).

It belongs to the secreted frizzled-related protein (sFRP) family. In terms of tissue distribution, highly expressed in the retinal pigment epithelium (RPE) and pancreas. Weak expression in heart, liver and muscle.

Its subcellular location is the secreted. Soluble frizzled-related proteins (sFRPS) function as modulators of Wnt signaling through direct interaction with Wnts. They have a role in regulating cell growth and differentiation in specific cell types. SFRP5 may be involved in determining the polarity of photoreceptor, and perhaps, other cells in the retina. This is Secreted frizzled-related protein 5 (SFRP5) from Homo sapiens (Human).